We begin with the raw amino-acid sequence, 109 residues long: Parvalbumin beta 2 (109 aa).

Ala2 is subject to N-acetylalanine. 2 EF-hand domains span residues 39–74 (KSPA…FSAG) and 78–109 (LSDA…MIKA). Ca(2+) contacts are provided by Asp52, Asp54, Ser56, Phe58, Glu60, Glu63, Asp91, Asp93, Asp95, Lys97, and Glu102.

It belongs to the parvalbumin family. In terms of assembly, monomer.

In terms of biological role, in muscle, parvalbumin is thought to be involved in relaxation after contraction. It binds two calcium ions. The protein is Parvalbumin beta 2 of Gadus morhua (Atlantic cod).